Here is a 388-residue protein sequence, read N- to C-terminus: Succinate--CoA ligase [ADP-forming] subunit beta (388 aa).

One can recognise an ATP-grasp domain in the interval 9-245 (KELLASYGLP…KSQENERELK (237 aa)). Residues Lys-46, 53–55 (GRG), Glu-100, Tyr-103, and Glu-108 contribute to the ATP site. Mg(2+)-binding residues include Asn-200 and Asp-214. Substrate contacts are provided by residues Asn-265 and 322–324 (GIV).

The protein belongs to the succinate/malate CoA ligase beta subunit family. In terms of assembly, heterotetramer of two alpha and two beta subunits. Mg(2+) serves as cofactor.

The catalysed reaction is succinate + ATP + CoA = succinyl-CoA + ADP + phosphate. It catalyses the reaction GTP + succinate + CoA = succinyl-CoA + GDP + phosphate. It functions in the pathway carbohydrate metabolism; tricarboxylic acid cycle; succinate from succinyl-CoA (ligase route): step 1/1. Its function is as follows. Succinyl-CoA synthetase functions in the citric acid cycle (TCA), coupling the hydrolysis of succinyl-CoA to the synthesis of either ATP or GTP and thus represents the only step of substrate-level phosphorylation in the TCA. The beta subunit provides nucleotide specificity of the enzyme and binds the substrate succinate, while the binding sites for coenzyme A and phosphate are found in the alpha subunit. The chain is Succinate--CoA ligase [ADP-forming] subunit beta from Neisseria meningitidis serogroup B (strain ATCC BAA-335 / MC58).